The primary structure comprises 445 residues: Glutamate--tRNA ligase 1 (445 aa).

A 'HIGH' region motif is present at residues 9–19 (PSPTGYLHVGN). The short motif at 238 to 242 (KISKR) is the 'KMSKS' region element. Residue Lys-241 coordinates ATP.

The protein belongs to the class-I aminoacyl-tRNA synthetase family. Glutamate--tRNA ligase type 1 subfamily. Monomer.

It localises to the cytoplasm. It carries out the reaction tRNA(Glu) + L-glutamate + ATP = L-glutamyl-tRNA(Glu) + AMP + diphosphate. Its function is as follows. Catalyzes the attachment of glutamate to tRNA(Glu) in a two-step reaction: glutamate is first activated by ATP to form Glu-AMP and then transferred to the acceptor end of tRNA(Glu). This is Glutamate--tRNA ligase 1 from Ehrlichia ruminantium (strain Gardel).